Consider the following 1103-residue polypeptide: Isoleucine--tRNA ligase (1103 aa).

The short motif at 53–63 (PFANGLPHYGH) is the 'HIGH' region element. The short motif at 628 to 632 (KLSKR) is the 'KMSKS' region element. Lys631 is an ATP binding site.

The protein belongs to the class-I aminoacyl-tRNA synthetase family. IleS type 2 subfamily. In terms of assembly, monomer. It depends on Zn(2+) as a cofactor.

Its subcellular location is the cytoplasm. It carries out the reaction tRNA(Ile) + L-isoleucine + ATP = L-isoleucyl-tRNA(Ile) + AMP + diphosphate. Functionally, catalyzes the attachment of isoleucine to tRNA(Ile). As IleRS can inadvertently accommodate and process structurally similar amino acids such as valine, to avoid such errors it has two additional distinct tRNA(Ile)-dependent editing activities. One activity is designated as 'pretransfer' editing and involves the hydrolysis of activated Val-AMP. The other activity is designated 'posttransfer' editing and involves deacylation of mischarged Val-tRNA(Ile). This Rickettsia akari (strain Hartford) protein is Isoleucine--tRNA ligase.